The sequence spans 339 residues: UDP-N-acetylglucosamine/UDP-N-acetylgalactosamine transporter nstp-4 (339 aa).

8 consecutive transmembrane segments (helical) span residues 44–64 (LSST…FFVI), 94–114 (LKVA…FFAL), 148–168 (YNWM…YPSG), 186–206 (ILGL…GVYF), 224–244 (LAFF…WQAI), 255–275 (GVIW…ALVV), 281–301 (ILKG…SWLV), and 305–325 (LTIT…TFLY).

This sequence belongs to the nucleotide-sugar transporter family. SLC35A subfamily. In terms of tissue distribution, widely expressed, including in pharynx and pharyngeal gland cells, seam cells, spermatheca, stomatointestinal muscle, vulva, and body wall muscle.

It is found in the golgi apparatus membrane. Functionally, uridine diphosphate-N-acetylglucosamine (UDP-GlcNAc) transporter in the Golgi apparatus. UDP-N-acetylgalactosamine (UDP-GalNAc) transporter in the Golgi apparatus. Apparently transports UDP-GlcNAc and UDP-GalNAc simultaneously, and independently, by an unknown mechanism. Functions redundantly with nucleotide sugar transporter srf-3. May be involved in gonadal development. This is UDP-N-acetylglucosamine/UDP-N-acetylgalactosamine transporter nstp-4 from Caenorhabditis elegans.